A 244-amino-acid chain; its full sequence is tRNA pseudouridine synthase A 2 (244 aa).

Catalysis depends on Asp52, which acts as the Nucleophile. Tyr110 serves as a coordination point for substrate.

This sequence belongs to the tRNA pseudouridine synthase TruA family. As to quaternary structure, homodimer.

It catalyses the reaction uridine(38/39/40) in tRNA = pseudouridine(38/39/40) in tRNA. Formation of pseudouridine at positions 38, 39 and 40 in the anticodon stem and loop of transfer RNAs. The sequence is that of tRNA pseudouridine synthase A 2 from Clostridium perfringens (strain 13 / Type A).